We begin with the raw amino-acid sequence, 493 residues long: Tripartite motif-containing protein 5 (493 aa).

Ala-2 is subject to N-acetylalanine. An RING-type zinc finger spans residues Cys-15–Arg-59. Ser-86 carries the phosphoserine modification. The segment at Gln-90–Glu-132 adopts a B box-type zinc-finger fold. Residues Cys-95, His-98, Cys-117, and His-123 each coordinate Zn(2+). Positions Leu-130–Gly-241 form a coiled coil. A required for interaction with GABARAP and for autophagy region spans residues Phe-185–Asn-198. Residues Leu-281–Ser-493 enclose the B30.2/SPRY domain.

The protein belongs to the TRIM/RBCC family. As to quaternary structure, can form homodimers and homotrimers. In addition to lower-order dimerization, also exhibits a higher-order multimerization and both low- and high-order multimerizations are essential for its restriction activity. Isoform Delta interacts with BTBD1 and BTBD2. Interacts with PSMC4, PSMC5, PSMD7 and HSPA8/HSC70. Interacts (via B30.2/SPRY domain) with HSPA1A/B. Interacts with PSMC2, MAP3K7/TAK1, TAB2 and TAB3. Interacts with SQSTM1. Interacts with TRIM6 and TRIM34. Interacts with ULK1 (phosphorylated form), GABARAP, GABARAPL1, GABARAPL2, MAP1LC3A, MAP1LC3C and BECN1. Post-translationally, degraded in a proteasome-independent fashion in the absence of viral infection but in a proteasome-dependent fashion following exposure to restriction sensitive virus. Autoubiquitinated in a RING finger- and UBE2D2-dependent manner. Monoubiquitinated by TRIM21. Deubiquitinated by Yersinia YopJ. Ubiquitination may not lead to proteasomal degradation.

It is found in the cytoplasm. The protein resides in the nucleus. The enzyme catalyses S-ubiquitinyl-[E2 ubiquitin-conjugating enzyme]-L-cysteine + [acceptor protein]-L-lysine = [E2 ubiquitin-conjugating enzyme]-L-cysteine + N(6)-ubiquitinyl-[acceptor protein]-L-lysine.. It functions in the pathway protein modification; protein ubiquitination. Capsid-specific restriction factor that prevents infection from non-host-adapted retroviruses. Blocks viral replication early in the life cycle, after viral entry but before reverse transcription. In addition to acting as a capsid-specific restriction factor, also acts as a pattern recognition receptor that activates innate immune signaling in response to the retroviral capsid lattice. Binding to the viral capsid triggers its E3 ubiquitin ligase activity, and in concert with the heterodimeric ubiquitin conjugating enzyme complex UBE2V1-UBE2N (also known as UBC13-UEV1A complex) generates 'Lys-63'-linked polyubiquitin chains, which in turn are catalysts in the autophosphorylation of the MAP3K7/TAK1 complex (includes TAK1, TAB2, and TAB3). Activation of the MAP3K7/TAK1 complex by autophosphorylation results in the induction and expression of NF-kappa-B and MAPK-responsive inflammatory genes, thereby leading to an innate immune response in the infected cell. Restricts infection by N-tropic murine leukemia virus (N-MLV), equine infectious anemia virus (EIAV), simian immunodeficiency virus of macaques (SIVmac), feline immunodeficiency virus (FIV), and bovine immunodeficiency virus (BIV). Plays a role in regulating autophagy through activation of autophagy regulator BECN1 by causing its dissociation from its inhibitors BCL2 and TAB2. Also plays a role in autophagy by acting as a selective autophagy receptor which recognizes and targets HIV-1 capsid protein p24 for autophagic destruction. In Homo sapiens (Human), this protein is Tripartite motif-containing protein 5 (TRIM5).